Reading from the N-terminus, the 113-residue chain is Large ribosomal subunit protein bL19 (113 aa).

The protein belongs to the bacterial ribosomal protein bL19 family.

In terms of biological role, this protein is located at the 30S-50S ribosomal subunit interface and may play a role in the structure and function of the aminoacyl-tRNA binding site. This chain is Large ribosomal subunit protein bL19, found in Moorella thermoacetica (strain ATCC 39073 / JCM 9320).